The following is a 276-amino-acid chain: Small ribosomal subunit protein uS2 (276 aa).

The protein belongs to the universal ribosomal protein uS2 family.

This Chlamydia caviae (strain ATCC VR-813 / DSM 19441 / 03DC25 / GPIC) (Chlamydophila caviae) protein is Small ribosomal subunit protein uS2.